The primary structure comprises 164 residues: Phosphopantetheine adenylyltransferase (164 aa).

Ser9 provides a ligand contact to substrate. Residues 9-10 (SF) and His17 each bind ATP. Positions 41, 78, and 92 each coordinate substrate. ATP-binding positions include 93-95 (GLR), Glu103, and 128-134 (SRPITAT).

It belongs to the bacterial CoaD family. In terms of assembly, homohexamer. It depends on Mg(2+) as a cofactor.

Its subcellular location is the cytoplasm. The enzyme catalyses (R)-4'-phosphopantetheine + ATP + H(+) = 3'-dephospho-CoA + diphosphate. It participates in cofactor biosynthesis; coenzyme A biosynthesis; CoA from (R)-pantothenate: step 4/5. In terms of biological role, reversibly transfers an adenylyl group from ATP to 4'-phosphopantetheine, yielding dephospho-CoA (dPCoA) and pyrophosphate. The chain is Phosphopantetheine adenylyltransferase from Agrobacterium fabrum (strain C58 / ATCC 33970) (Agrobacterium tumefaciens (strain C58)).